Consider the following 40-residue polypeptide: Large ribosomal subunit protein bL36 (40 aa).

This sequence belongs to the bacterial ribosomal protein bL36 family.

The protein is Large ribosomal subunit protein bL36 of Corynebacterium glutamicum (strain R).